The following is a 157-amino-acid chain: Small ribosomal subunit protein uS7 (157 aa).

This sequence belongs to the universal ribosomal protein uS7 family. As to quaternary structure, part of the 30S ribosomal subunit. Contacts proteins S9 and S11.

In terms of biological role, one of the primary rRNA binding proteins, it binds directly to 16S rRNA where it nucleates assembly of the head domain of the 30S subunit. Is located at the subunit interface close to the decoding center, probably blocks exit of the E-site tRNA. The protein is Small ribosomal subunit protein uS7 of Borrelia turicatae (strain 91E135).